A 248-amino-acid polypeptide reads, in one-letter code: PF03932 family protein CutC (248 aa).

It belongs to the CutC family. In terms of assembly, homodimer.

It localises to the cytoplasm. The polypeptide is PF03932 family protein CutC (Salmonella typhimurium (strain LT2 / SGSC1412 / ATCC 700720)).